The primary structure comprises 142 residues: Large ribosomal subunit protein uL16 (142 aa).

Belongs to the universal ribosomal protein uL16 family. Part of the 50S ribosomal subunit.

Binds 23S rRNA and is also seen to make contacts with the A and possibly P site tRNAs. The protein is Large ribosomal subunit protein uL16 of Thermotoga neapolitana (strain ATCC 49049 / DSM 4359 / NBRC 107923 / NS-E).